Consider the following 127-residue polypeptide: UPF0325 protein VS_2356 (127 aa).

This sequence belongs to the UPF0325 family.

This is UPF0325 protein VS_2356 from Vibrio atlanticus (strain LGP32) (Vibrio splendidus (strain Mel32)).